We begin with the raw amino-acid sequence, 63 residues long: uncharacterized protein (63 aa).

Residues 37 to 57 (IFFPTTFDVLLLAILIFLACA) traverse the membrane as a helical segment.

The protein resides in the cell membrane. This is an uncharacterized protein from Bacillus subtilis (strain 168).